A 404-amino-acid polypeptide reads, in one-letter code: Argininosuccinate synthase (404 aa).

ATP contacts are provided by residues 10-18 (AFSGGLDTS) and A37. 2 residues coordinate L-citrulline: Y88 and S93. An ATP-binding site is contributed by G118. L-aspartate is bound by residues T120, N124, and D125. N124 contributes to the L-citrulline binding site. Residues R128, S179, S188, E264, and Y276 each coordinate L-citrulline.

It belongs to the argininosuccinate synthase family. Type 1 subfamily. Homotetramer.

It is found in the cytoplasm. It carries out the reaction L-citrulline + L-aspartate + ATP = 2-(N(omega)-L-arginino)succinate + AMP + diphosphate + H(+). It functions in the pathway amino-acid biosynthesis; L-arginine biosynthesis; L-arginine from L-ornithine and carbamoyl phosphate: step 2/3. This Nitrosomonas europaea (strain ATCC 19718 / CIP 103999 / KCTC 2705 / NBRC 14298) protein is Argininosuccinate synthase.